Consider the following 137-residue polypeptide: Peptide methionine sulfoxide reductase MsrB (137 aa).

A MsrB domain is found at 7–129; sequence AEELKKNLSD…NSASLRFTDG (123 aa). Residues C46, C49, C95, and C98 each coordinate Zn(2+). C118 serves as the catalytic Nucleophile.

It belongs to the MsrB Met sulfoxide reductase family. Requires Zn(2+) as cofactor.

It carries out the reaction L-methionyl-[protein] + [thioredoxin]-disulfide + H2O = L-methionyl-(R)-S-oxide-[protein] + [thioredoxin]-dithiol. In Shigella dysenteriae serotype 1 (strain Sd197), this protein is Peptide methionine sulfoxide reductase MsrB.